The primary structure comprises 506 residues: Transcription factor CP2 (506 aa).

Residues 61–300 (ENKILPFQYV…SPGFNSSHNS (240 aa)) form the Grh/CP2 DB domain. The DNA-binding stretch occupies residues 133-395 (EHQQLEGWRW…LFNALKGRIV (263 aa)). Disordered stretches follow at residues 238 to 268 (FKPK…YQPS) and 291 to 316 (SPGF…QPEP). Basic and acidic residues predominate over residues 241 to 265 (KGADRKQKTDREKMEKRTPQEKEKY). Residues 291–300 (SPGFNSSHNS) show a composition bias toward polar residues.

It belongs to the grh/CP2 family. CP2 subfamily. In terms of assembly, component of the SSP (stage selector protein) complex, which appears to be a heteromer of TFCP2 and 2 copies of NFE4.

The protein resides in the nucleus. May function as a transcription factor. The polypeptide is Transcription factor CP2 (tfcp2) (Xenopus laevis (African clawed frog)).